The sequence spans 430 residues: Oleandomycin glycosyltransferase (430 aa).

The segment at 385-430 is disordered; the sequence is GGTRRAADLIEAELPARHERQEPVGDRPNVGDRPAGVRSDRQRSAL. Over residues 386–409 the composition is skewed to basic and acidic residues; the sequence is GTRRAADLIEAELPARHERQEPVG.

This sequence belongs to the UDP-glycosyltransferase family.

Its function is as follows. Specifically inactivates oleandomycin via 2'-O-glycosylation using UDP-glucose. This chain is Oleandomycin glycosyltransferase (oleD), found in Streptomyces antibioticus.